Here is a 192-residue protein sequence, read N- to C-terminus: Acetyltransferase PA3944 (192 aa).

The N-acetyltransferase domain occupies 18–187 (LLLRAWRDSD…RHILYRVDAA (170 aa)). CoA-binding positions include 105–107 (WRL), Gly-113, Asn-145, and 150–152 (GLM).

Its function is as follows. Catalyzes the transfer of an acetyl group from acetyl coenzyme A (AcCoA) to an acceptor substrate and releases both CoA and the acetylated product. It prefers the peptide Asp-Phe methyl ester (or aspartame) and the peptide antibiotics polymyxin B and colistin. Other substrates like dopamine, serotonin, puromycin, chloramphenicol, D-glucosamine, glycine and N-alpha-acetyl-L-glutamine are used and displayed lower activity. This is Acetyltransferase PA3944 from Pseudomonas aeruginosa (strain ATCC 15692 / DSM 22644 / CIP 104116 / JCM 14847 / LMG 12228 / 1C / PRS 101 / PAO1).